The sequence spans 342 residues: Transcriptional regulator of the unfolded protein response hacA (342 aa).

The segment at 1-105 (MEDNFASVVE…TSRERKRLEM (105 aa)) is disordered. Composition is skewed to basic and acidic residues over residues 35–48 (PETKVQETKTEEKK) and 74–88 (KTEDEKEQRRIERVL). The bZIP domain maps to 80 to 143 (EQRRIERVLR…NRLSQQLAQL (64 aa)). The segment at 82-135 (RRIERVLRNRAAAQTSRERKRLEMEKLENEKIQMEQQNQFLLQRLSQMEAENNR) is basic motif. Residues 136–143 (LSQQLAQL) are leucine-zipper. Disordered stretches follow at residues 146–167 (EVRNSRNSTPKPGSPATASPTL) and 306–330 (EPAHGLPNETPYQTSGLQPSLGAST). The span at 315–330 (TPYQTSGLQPSLGAST) shows a compositional bias: polar residues.

It belongs to the bZIP family.

The protein resides in the nucleus. Functionally, master transcriptional regulator of the unfolded protein response (UPR) that recognizes and binds to the UPR element (UPRE) in the promoter of UPR-regulated genes. In the canonical UPR pathway, the ireA RNase splices the cytoplasmic mRNA hacA, which alters the reading frame to allow translation of the bZIP transcription factor hacA. Induces the expression of pmrA, scrA and spfA in response to UPR. The polypeptide is Transcriptional regulator of the unfolded protein response hacA (Aspergillus fumigatus (strain ATCC MYA-4609 / CBS 101355 / FGSC A1100 / Af293) (Neosartorya fumigata)).